A 354-amino-acid chain; its full sequence is Ion-translocating oxidoreductase complex subunit D (354 aa).

Transmembrane regions (helical) follow at residues 19–39 (IMLW…YYFG), 40–60 (FGVL…EFLV), 70–89 (FYIS…VAIP), 94–116 (YWII…GGLG), and 123–143 (AMVG…TWLA). An FMN phosphoryl threonine modification is found at T186. 5 helical membrane passes run 215–235 (LAGL…LFLV), 242–262 (WQIP…SWLF), 266–286 (MPSP…FFIA), 300–320 (LVFG…GGYP), and 321–341 (DGAA…DQYT).

It belongs to the NqrB/RnfD family. The complex is composed of six subunits: RnfA, RnfB, RnfC, RnfD, RnfE and RnfG. It depends on FMN as a cofactor.

It is found in the cell inner membrane. Functionally, part of a membrane-bound complex that couples electron transfer with translocation of ions across the membrane. The chain is Ion-translocating oxidoreductase complex subunit D from Mannheimia succiniciproducens (strain KCTC 0769BP / MBEL55E).